We begin with the raw amino-acid sequence, 159 residues long: Eukaryotic translation initiation factor 5A (159 aa).

Lys55 is subject to Hypusine.

The protein belongs to the eIF-5A family. Lys-55 undergoes hypusination, a unique post-translational modification that consists in the addition of a butylamino group from spermidine to lysine side chain, leading to the formation of the unusual amino acid hypusine. eIF-5As are the only known proteins to undergo this modification, which is essential for their function.

The protein localises to the cytoplasm. Translation factor that promotes translation elongation and termination, particularly upon ribosome stalling at specific amino acid sequence contexts. Binds between the exit (E) and peptidyl (P) site of the ribosome and promotes rescue of stalled ribosome: specifically required for efficient translation of polyproline-containing peptides as well as other motifs that stall the ribosome. Acts as a ribosome quality control (RQC) cofactor by joining the RQC complex to facilitate peptidyl transfer during CAT tailing step. In Dictyostelium discoideum (Social amoeba), this protein is Eukaryotic translation initiation factor 5A (eif5a).